Reading from the N-terminus, the 140-residue chain is MSFFVQKLSEKATIPTKGSANSAGYDLYAAAECIVPRRGKVLVDTDLAIAVPEGTYGRVAPRSGLASKHSIDTGAGVIDADYRGHVRVLLFNYSDVDFPIKVGDRIAQLILERIVNPPVILVESLEATVRGANGFGSTGV.

Substrate contacts are provided by residues 62 to 64 (RSG), 76 to 79 (GVID), R130, and 135 to 136 (FG).

It belongs to the dUTPase family. Homotrimer. Requires Mg(2+) as cofactor.

The enzyme catalyses dUTP + H2O = dUMP + diphosphate + H(+). It functions in the pathway pyrimidine metabolism; dUMP biosynthesis; dUMP from dCTP (dUTP route): step 2/2. Functionally, this enzyme is involved in nucleotide metabolism: it produces dUMP, the immediate precursor of thymidine nucleotides and it decreases the intracellular concentration of dUTP so that uracil cannot be incorporated into DNA. The chain is Probable deoxyuridine 5'-triphosphate nucleotidohydrolase from Schizosaccharomyces pombe (strain 972 / ATCC 24843) (Fission yeast).